A 291-amino-acid chain; its full sequence is Tyrosine recombinase XerD (291 aa).

The Core-binding (CB) domain occupies 1–82; the sequence is MEEGLIDRLL…ACKRLYIWME (82 aa). The Tyr recombinase domain maps to 103 to 285; the sequence is NIPTLITEQQ…ANVWLQGVVK (183 aa). Residues arginine 143, lysine 167, histidine 237, arginine 240, and histidine 263 contribute to the active site. Catalysis depends on tyrosine 272, which acts as the O-(3'-phospho-DNA)-tyrosine intermediate.

It belongs to the 'phage' integrase family. XerD subfamily. In terms of assembly, forms a cyclic heterotetrameric complex composed of two molecules of XerC and two molecules of XerD.

Its subcellular location is the cytoplasm. In terms of biological role, site-specific tyrosine recombinase, which acts by catalyzing the cutting and rejoining of the recombining DNA molecules. The XerC-XerD complex is essential to convert dimers of the bacterial chromosome into monomers to permit their segregation at cell division. It also contributes to the segregational stability of plasmids. The sequence is that of Tyrosine recombinase XerD from Neisseria meningitidis serogroup A / serotype 4A (strain DSM 15465 / Z2491).